The following is a 321-amino-acid chain: Homoserine O-succinyltransferase (321 aa).

Cysteine 142 (acyl-thioester intermediate) is an active-site residue. The substrate site is built by lysine 163 and serine 192. The active-site Proton acceptor is histidine 235. Residue glutamate 237 is part of the active site. Position 249 (arginine 249) interacts with substrate.

Belongs to the MetA family.

Its subcellular location is the cytoplasm. It carries out the reaction L-homoserine + succinyl-CoA = O-succinyl-L-homoserine + CoA. It participates in amino-acid biosynthesis; L-methionine biosynthesis via de novo pathway; O-succinyl-L-homoserine from L-homoserine: step 1/1. Transfers a succinyl group from succinyl-CoA to L-homoserine, forming succinyl-L-homoserine. This is Homoserine O-succinyltransferase from Shewanella loihica (strain ATCC BAA-1088 / PV-4).